The following is an 865-amino-acid chain: cGMP-specific 3',5'-cyclic phosphodiesterase (865 aa).

Ser-92 is subject to Phosphoserine. GAF domains follow at residues 154–304 (DVTA…GIVL) and 336–493 (SLEV…GLGI). The PDEase domain occupies 526–850 (ETRELQALSA…QKWQALAEQQ (325 aa)). The active-site Proton donor is His-603. Positions 607, 643, 644, and 754 each coordinate Zn(2+). Position 644 (Asp-644) interacts with Mg(2+). Gln-807 contacts 3',5'-cyclic GMP.

Belongs to the cyclic nucleotide phosphodiesterase family. The cofactor is Zn(2+). Mg(2+) is required as a cofactor. Phosphorylation is regulated by binding of cGMP to the two allosteric sites. Phosphorylation by PRKG1 leads to its activation.

It catalyses the reaction 3',5'-cyclic GMP + H2O = GMP + H(+). It functions in the pathway purine metabolism; 3',5'-cyclic GMP degradation; GMP from 3',5'-cyclic GMP: step 1/1. Plays a role in signal transduction by regulating the intracellular concentration of cyclic nucleotides. This phosphodiesterase catalyzes the specific hydrolysis of cGMP to 5'-GMP. Specifically regulates nitric-oxide-generated cGMP. This is cGMP-specific 3',5'-cyclic phosphodiesterase (Pde5a) from Mus musculus (Mouse).